A 284-amino-acid chain; its full sequence is Phosphatidylglycerol--prolipoprotein diacylglyceryl transferase (284 aa).

7 helical membrane-spanning segments follow: residues 18 to 38 (LGGI…VIAF), 62 to 82 (YFLW…VLIY), 106 to 126 (FVGI…IASY), 136 to 156 (LLIY…FGRI), 190 to 210 (PSQL…VLWA), 218 to 238 (GLLI…AEFY), and 252 to 272 (LSMG…ILLY). A 1,2-diacyl-sn-glycero-3-phospho-(1'-sn-glycerol) is bound at residue arginine 155.

The protein belongs to the Lgt family.

It is found in the cell inner membrane. It carries out the reaction L-cysteinyl-[prolipoprotein] + a 1,2-diacyl-sn-glycero-3-phospho-(1'-sn-glycerol) = an S-1,2-diacyl-sn-glyceryl-L-cysteinyl-[prolipoprotein] + sn-glycerol 1-phosphate + H(+). The protein operates within protein modification; lipoprotein biosynthesis (diacylglyceryl transfer). Its function is as follows. Catalyzes the transfer of the diacylglyceryl group from phosphatidylglycerol to the sulfhydryl group of the N-terminal cysteine of a prolipoprotein, the first step in the formation of mature lipoproteins. The sequence is that of Phosphatidylglycerol--prolipoprotein diacylglyceryl transferase from Helicobacter pylori (strain G27).